A 711-amino-acid chain; its full sequence is 1,4-alpha-glucan-branching enzyme (711 aa).

Residues tryptophan 98 and lysine 135 each contribute to the (1,4-alpha-D-glucosyl)n site. The Nucleophile role is filled by aspartate 353. The Proton donor role is filled by glutamate 414.

The protein belongs to the glycosyl hydrolase 13 family. GlgB subfamily.

Its subcellular location is the cytoplasm. It carries out the reaction Transfers a segment of a (1-&gt;4)-alpha-D-glucan chain to a primary hydroxy group in a similar glucan chain.. Its pathway is glycan biosynthesis; glycogen biosynthesis. In terms of biological role, glycogen-branching enzyme participates in the glycogen biosynthetic process along with glycogenin and glycogen synthase. Generates alpha-1,6-glucosidic branches from alpha-1,4-linked glucose chains, to increase solubility of the glycogen polymer. This is 1,4-alpha-glucan-branching enzyme (GLC3) from Debaryomyces hansenii (strain ATCC 36239 / CBS 767 / BCRC 21394 / JCM 1990 / NBRC 0083 / IGC 2968) (Yeast).